Consider the following 126-residue polypeptide: Bleomycin resistance protein (126 aa).

A VOC domain is found at methionine 1–asparagine 119.

It belongs to the bleomycin resistance protein family.

Functionally, binding protein with a strong affinity to the bleomycin family of antibiotics. Binds to CL990; an antimitotic-antibiotic compound. The polypeptide is Bleomycin resistance protein (ble) (Klebsiella pneumoniae).